We begin with the raw amino-acid sequence, 492 residues long: Ribose import ATP-binding protein RbsA (492 aa).

ABC transporter domains lie at 3 to 239 and 238 to 492; these read IDMR…VGRK and RKLE…TGGK. 35 to 42 provides a ligand contact to ATP; sequence GENGAGKS.

It belongs to the ABC transporter superfamily. Ribose importer (TC 3.A.1.2.1) family. As to quaternary structure, the complex is composed of an ATP-binding protein (RbsA), two transmembrane proteins (RbsC) and a solute-binding protein (RbsB).

The protein localises to the cell membrane. It catalyses the reaction D-ribose(out) + ATP + H2O = D-ribose(in) + ADP + phosphate + H(+). In terms of biological role, part of the ABC transporter complex RbsABC involved in ribose import. Responsible for energy coupling to the transport system. This Streptococcus agalactiae serotype V (strain ATCC BAA-611 / 2603 V/R) protein is Ribose import ATP-binding protein RbsA.